Here is a 279-residue protein sequence, read N- to C-terminus: Probable endonuclease 4 (279 aa).

The Zn(2+) site is built by histidine 66, histidine 106, glutamate 142, aspartate 176, histidine 179, histidine 213, aspartate 226, histidine 228, and glutamate 258.

It belongs to the AP endonuclease 2 family. Zn(2+) is required as a cofactor.

The enzyme catalyses Endonucleolytic cleavage to 5'-phosphooligonucleotide end-products.. Functionally, endonuclease IV plays a role in DNA repair. It cleaves phosphodiester bonds at apurinic or apyrimidinic (AP) sites, generating a 3'-hydroxyl group and a 5'-terminal sugar phosphate. The sequence is that of Probable endonuclease 4 from Photobacterium profundum (strain SS9).